A 72-amino-acid chain; its full sequence is Translation initiation factor IF-1 (72 aa).

Positions 1–72 constitute an S1-like domain; it reads MAKEDNIEMQ…SKGRIVFRSR (72 aa).

This sequence belongs to the IF-1 family. Component of the 30S ribosomal translation pre-initiation complex which assembles on the 30S ribosome in the order IF-2 and IF-3, IF-1 and N-formylmethionyl-tRNA(fMet); mRNA recruitment can occur at any time during PIC assembly.

Its subcellular location is the cytoplasm. One of the essential components for the initiation of protein synthesis. Stabilizes the binding of IF-2 and IF-3 on the 30S subunit to which N-formylmethionyl-tRNA(fMet) subsequently binds. Helps modulate mRNA selection, yielding the 30S pre-initiation complex (PIC). Upon addition of the 50S ribosomal subunit IF-1, IF-2 and IF-3 are released leaving the mature 70S translation initiation complex. The sequence is that of Translation initiation factor IF-1 from Salmonella paratyphi A (strain ATCC 9150 / SARB42).